The chain runs to 108 residues: Small ribosomal subunit protein eS25x (108 aa).

The segment at 1–36 (MAPKKDKVPPPSSKPAKSGGGKQKKKKWSKGKQKEK) is disordered. Residues 22 to 31 (KQKKKKWSKG) are compositionally biased toward basic residues.

This sequence belongs to the eukaryotic ribosomal protein eS25 family.

The chain is Small ribosomal subunit protein eS25x (RPS25D) from Arabidopsis thaliana (Mouse-ear cress).